The sequence spans 84 residues: Exodeoxyribonuclease 7 small subunit (84 aa).

Belongs to the XseB family. As to quaternary structure, heterooligomer composed of large and small subunits.

The protein localises to the cytoplasm. It carries out the reaction Exonucleolytic cleavage in either 5'- to 3'- or 3'- to 5'-direction to yield nucleoside 5'-phosphates.. In terms of biological role, bidirectionally degrades single-stranded DNA into large acid-insoluble oligonucleotides, which are then degraded further into small acid-soluble oligonucleotides. The sequence is that of Exodeoxyribonuclease 7 small subunit from Yersinia pseudotuberculosis serotype O:3 (strain YPIII).